The sequence spans 266 residues: tRNA (guanine-N(7)-)-methyltransferase (266 aa).

The interval 1–32 (MSDHGRMHIPESGLATPAAAHSDDPPHPHFNR) is disordered. S-adenosyl-L-methionine-binding residues include glutamate 96, glutamate 121, aspartate 148, and aspartate 171. Residue aspartate 171 is part of the active site. Residues lysine 175 and aspartate 207 each contribute to the substrate site.

This sequence belongs to the class I-like SAM-binding methyltransferase superfamily. TrmB family.

The enzyme catalyses guanosine(46) in tRNA + S-adenosyl-L-methionine = N(7)-methylguanosine(46) in tRNA + S-adenosyl-L-homocysteine. The protein operates within tRNA modification; N(7)-methylguanine-tRNA biosynthesis. Its function is as follows. Catalyzes the formation of N(7)-methylguanine at position 46 (m7G46) in tRNA. This chain is tRNA (guanine-N(7)-)-methyltransferase, found in Mycolicibacterium vanbaalenii (strain DSM 7251 / JCM 13017 / BCRC 16820 / KCTC 9966 / NRRL B-24157 / PYR-1) (Mycobacterium vanbaalenii).